The chain runs to 198 residues: 3-isopropylmalate dehydratase small subunit (198 aa).

The protein belongs to the LeuD family. LeuD type 1 subfamily. Heterodimer of LeuC and LeuD.

The catalysed reaction is (2R,3S)-3-isopropylmalate = (2S)-2-isopropylmalate. It participates in amino-acid biosynthesis; L-leucine biosynthesis; L-leucine from 3-methyl-2-oxobutanoate: step 2/4. Its function is as follows. Catalyzes the isomerization between 2-isopropylmalate and 3-isopropylmalate, via the formation of 2-isopropylmaleate. The chain is 3-isopropylmalate dehydratase small subunit from Mycobacterium marinum (strain ATCC BAA-535 / M).